The primary structure comprises 180 residues: Transcription factor HES-7.1-A (180 aa).

A bHLH domain is found at 13–70; sequence HRKLLKPLVEKRRRERINNSLEKLRIFLFQTLKSEKLKNPKVEKAEILECTVQFLQSR. One can recognise an Orange domain in the interval 84 to 116; sequence YQSGFQHCLETTLHFMNSKPDMNGVTKELLSHQ. Residues 176–179 carry the WRPW motif motif; that stretch reads WRPW.

As to quaternary structure, transcription repression requires formation of a complex with a corepressor protein of the Groucho/TLE family. As to expression, expressed in the presumptive midbrain-hindbrain boundary (MHB) as early as the early gastrula stage (stage 10.5). Expression in the MHB continues through to tailbud stage. Also transiently expressed in the eye anlage at late neurula stage.

It is found in the nucleus. Functionally, transcriptional repressor. Represses transcription from both N box- and E box-containing promoters. Demarcates the prospective midbrain-hindbrain boundary (MHB) region in the neuroectoderm in early gastrulae embryos by repressing transcription of a number of target genes. This chain is Transcription factor HES-7.1-A (hes7.1-a), found in Xenopus laevis (African clawed frog).